Reading from the N-terminus, the 360-residue chain is Putative F-box protein At3g47150 (360 aa).

Residues 6-56 (NTTQIYIPLDLQINILLRLPVKSLLRFRCVSKLWCSIITSHDFRNRHFNIT) form the F-box domain.

This chain is Putative F-box protein At3g47150, found in Arabidopsis thaliana (Mouse-ear cress).